Here is a 175-residue protein sequence, read N- to C-terminus: Transcriptional activatory protein BadR (175 aa).

Positions 20-156 (ANRLFFRLYQ…TLHYLLKILD (137 aa)) constitute an HTH marR-type domain.

Functionally, transcriptional activator of genes for the anaerobic degradation of benzoate. The polypeptide is Transcriptional activatory protein BadR (badR) (Rhodopseudomonas palustris (strain ATCC BAA-98 / CGA009)).